A 530-amino-acid polypeptide reads, in one-letter code: Autoinducer-2 kinase (530 aa).

Belongs to the FGGY kinase family.

The protein localises to the cytoplasm. The enzyme catalyses (S)-4,5-dihydroxypentane-2,3-dione + ATP = (2S)-2-hydroxy-3,4-dioxopentyl phosphate + ADP + H(+). Its function is as follows. Catalyzes the phosphorylation of autoinducer-2 (AI-2) to phospho-AI-2, which subsequently inactivates the transcriptional regulator LsrR and leads to the transcription of the lsr operon. Phosphorylates the ring-open form of (S)-4,5-dihydroxypentane-2,3-dione (DPD), which is the precursor to all AI-2 signaling molecules, at the C5 position. In Escherichia coli (strain K12 / DH10B), this protein is Autoinducer-2 kinase.